Consider the following 308-residue polypeptide: Coenzyme PQQ synthesis protein B (308 aa).

It belongs to the PqqB family.

It participates in cofactor biosynthesis; pyrroloquinoline quinone biosynthesis. In terms of biological role, may be involved in the transport of PQQ or its precursor to the periplasm. This Rhodopseudomonas palustris (strain TIE-1) protein is Coenzyme PQQ synthesis protein B.